The sequence spans 739 residues: Phosphoribosylformylglycinamidine synthase subunit PurL (739 aa).

Residue His-54 is part of the active site. Tyr-57 and Lys-96 together coordinate ATP. Glu-98 is a Mg(2+) binding site. Substrate-binding positions include 99–102 (SHNH) and Arg-121. His-100 acts as the Proton acceptor in catalysis. Asp-122 contacts Mg(2+). Gln-245 is a binding site for substrate. Asp-273 is a binding site for Mg(2+). 317 to 319 (ESQ) serves as a coordination point for substrate. Residues Asp-500 and Gly-537 each contribute to the ATP site. Mg(2+) is bound at residue Asn-538. A substrate-binding site is contributed by Ser-540.

Belongs to the FGAMS family. In terms of assembly, monomer. Part of the FGAM synthase complex composed of 1 PurL, 1 PurQ and 2 PurS subunits.

The protein localises to the cytoplasm. The catalysed reaction is N(2)-formyl-N(1)-(5-phospho-beta-D-ribosyl)glycinamide + L-glutamine + ATP + H2O = 2-formamido-N(1)-(5-O-phospho-beta-D-ribosyl)acetamidine + L-glutamate + ADP + phosphate + H(+). It functions in the pathway purine metabolism; IMP biosynthesis via de novo pathway; 5-amino-1-(5-phospho-D-ribosyl)imidazole from N(2)-formyl-N(1)-(5-phospho-D-ribosyl)glycinamide: step 1/2. In terms of biological role, part of the phosphoribosylformylglycinamidine synthase complex involved in the purines biosynthetic pathway. Catalyzes the ATP-dependent conversion of formylglycinamide ribonucleotide (FGAR) and glutamine to yield formylglycinamidine ribonucleotide (FGAM) and glutamate. The FGAM synthase complex is composed of three subunits. PurQ produces an ammonia molecule by converting glutamine to glutamate. PurL transfers the ammonia molecule to FGAR to form FGAM in an ATP-dependent manner. PurS interacts with PurQ and PurL and is thought to assist in the transfer of the ammonia molecule from PurQ to PurL. The chain is Phosphoribosylformylglycinamidine synthase subunit PurL from Bacillus cytotoxicus (strain DSM 22905 / CIP 110041 / 391-98 / NVH 391-98).